Consider the following 341-residue polypeptide: Phosphoribosylaminoimidazole-succinocarboxamide synthase, chloroplastic (341 aa).

It belongs to the SAICAR synthetase family.

The protein resides in the plastid. The protein localises to the chloroplast. It carries out the reaction 5-amino-1-(5-phospho-D-ribosyl)imidazole-4-carboxylate + L-aspartate + ATP = (2S)-2-[5-amino-1-(5-phospho-beta-D-ribosyl)imidazole-4-carboxamido]succinate + ADP + phosphate + 2 H(+). Its pathway is purine metabolism; IMP biosynthesis via de novo pathway; 5-amino-1-(5-phospho-D-ribosyl)imidazole-4-carboxamide from 5-amino-1-(5-phospho-D-ribosyl)imidazole-4-carboxylate: step 1/2. The protein is Phosphoribosylaminoimidazole-succinocarboxamide synthase, chloroplastic (PUR7) of Vigna aconitifolia (Moth bean).